Here is a 535-residue protein sequence, read N- to C-terminus: Light-independent protochlorophyllide reductase subunit B (535 aa).

D36 is a binding site for [4Fe-4S] cluster. The Proton donor role is filled by D292. 428 to 429 (GL) contributes to the substrate binding site.

The protein belongs to the ChlB/BchB/BchZ family. In terms of assembly, protochlorophyllide reductase is composed of three subunits; BchL, BchN and BchB. Forms a heterotetramer of two BchB and two BchN subunits. [4Fe-4S] cluster is required as a cofactor.

It catalyses the reaction chlorophyllide a + oxidized 2[4Fe-4S]-[ferredoxin] + 2 ADP + 2 phosphate = protochlorophyllide a + reduced 2[4Fe-4S]-[ferredoxin] + 2 ATP + 2 H2O. The protein operates within porphyrin-containing compound metabolism; bacteriochlorophyll biosynthesis (light-independent). In terms of biological role, component of the dark-operative protochlorophyllide reductase (DPOR) that uses Mg-ATP and reduced ferredoxin to reduce ring D of protochlorophyllide (Pchlide) to form chlorophyllide a (Chlide). This reaction is light-independent. The NB-protein (BchN-BchB) is the catalytic component of the complex. The sequence is that of Light-independent protochlorophyllide reductase subunit B from Chlorobaculum parvum (strain DSM 263 / NCIMB 8327) (Chlorobium vibrioforme subsp. thiosulfatophilum).